Consider the following 154-residue polypeptide: Ubiquitin-like protein 4A (154 aa).

The Ubiquitin-like domain maps to 1 to 76 (MILTVKPLQG…LNLVVRPAGE (76 aa)).

As to quaternary structure, component of the bag6/bat3 complex.

It is found in the cytoplasm. The protein localises to the cytosol. It localises to the nucleus. Its function is as follows. As part of a cytosolic protein quality control complex, the bag6/bat3 complex, maintains misfolded and hydrophobic patches-containing proteins in a soluble state and participates in their proper delivery to the endoplasmic reticulum or alternatively can promote their sorting to the proteasome where they undergo degradation. The bag6/bat3 complex is involved in the post-translational delivery of tail-anchored/type II transmembrane proteins to the endoplasmic reticulum membrane. Similarly, the bag6/bat3 complex also functions as a sorting platform for proteins of the secretory pathway that are mislocalized to the cytosol either delivering them to the proteasome for degradation or to the endoplasmic reticulum. The bag6/bat3 complex also plays a role in the endoplasmic reticulum-associated degradation (ERAD), a quality control mechanism that eliminates unwanted proteins of the endoplasmic reticulum through their retrotranslocation to the cytosol and their targeting to the proteasome. It maintains these retrotranslocated proteins in an unfolded yet soluble state condition in the cytosol to ensure their proper delivery to the proteasome. This Esox lucius (Northern pike) protein is Ubiquitin-like protein 4A (ubl4a).